The following is an 817-amino-acid chain: Anaphase-promoting complex subunit 4 (817 aa).

Y469 bears the Phosphotyrosine mark. 2 positions are modified to phosphoserine: S757 and S758. K772 participates in a covalent cross-link: Glycyl lysine isopeptide (Lys-Gly) (interchain with G-Cter in SUMO2). Phosphoserine is present on residues S777 and S779. K798 is covalently cross-linked (Glycyl lysine isopeptide (Lys-Gly) (interchain with G-Cter in SUMO2)).

This sequence belongs to the APC4 family. The mammalian APC/C is composed at least of 14 distinct subunits ANAPC1, ANAPC2, CDC27/APC3, ANAPC4, ANAPC5, CDC16/APC6, ANAPC7, CDC23/APC8, ANAPC10, ANAPC11, CDC26/APC12, ANAPC13, ANAPC15 and ANAPC16 that assemble into a complex of at least 19 chains with a combined molecular mass of around 1.2 MDa; APC/C interacts with FZR1 and FBXO5. In the context of the APC/C complex, directly interacts with UBE2S.

It localises to the nucleus. It functions in the pathway protein modification; protein ubiquitination. Component of the anaphase promoting complex/cyclosome (APC/C), a cell cycle-regulated E3 ubiquitin ligase that controls progression through mitosis and the G1 phase of the cell cycle. The APC/C complex acts by mediating ubiquitination and subsequent degradation of target proteins: it mainly mediates the formation of 'Lys-11'-linked polyubiquitin chains and, to a lower extent, the formation of 'Lys-48'- and 'Lys-63'-linked polyubiquitin chains. The APC/C complex catalyzes assembly of branched 'Lys-11'-/'Lys-48'-linked branched ubiquitin chains on target proteins. This chain is Anaphase-promoting complex subunit 4 (ANAPC4), found in Pongo abelii (Sumatran orangutan).